A 500-amino-acid chain; its full sequence is MAQPTSGLYSTFGFFICLLFFPASWEAGANTFQELQKTGEPPKFDHLLPLTQGLTHRASSDQKTSRQHPPDLPEATATQKAKNQCNTTRLVKPVHTPLDNAKAADYGNTTVRHEMPPASEKDLSSQGKHLMARNERSADDPRSTTSENGSDGKRLTSAPRRNTSCMPSTRRTSLTTKSGMRASPMGASASLRTTSQKPTTFHVSELIRQSSSPVYATETPRTSYNTLKTLTTSGPEHHTIPFASDKSVQITTEHIKEATSASEITRTQSTFTKYEGKTSPASESSSQAQVLPIKHHTTSASENTIPVSAKSTPSTEKATKPTASPTVFQRKTIVATKTVRATRTSERTPVFLETTQPAKATEDKSSTVPSHVHKTETMHQGTVGSLTSRTNLGLSTSEAHYPQQSTHSLPGGLHAAGETGENNSFPVWAIVIVILMAVIILLVFIGLILLVSCASRARHVLTQNSEEPEPQPEDKGSRNSYPVYLMEQQNLNLNQIPSPP.

The first 27 residues, 1–27, serve as a signal peptide directing secretion; it reads MAQPTSGLYSTFGFFICLLFFPASWEA. Residues 28 to 429 are Extracellular-facing; sequence GANTFQELQK…GENNSFPVWA (402 aa). Disordered regions lie at residues 55-198 and 275-324; these read THRA…SQKP and EGKT…PTAS. The segment covering 58–71 has biased composition (basic and acidic residues); that stretch reads ASSDQKTSRQHPPD. Residues 76–89 show a composition bias toward polar residues; that stretch reads TATQKAKNQCNTTR. Asn-108 is a glycosylation site (N-linked (GlcNAc...) asparagine). Basic and acidic residues-rich tracts occupy residues 111–123 and 132–142; these read VRHE…EKDL and ARNERSADDPR. N-linked (GlcNAc...) asparagine glycosylation is present at Asn-148. Composition is skewed to polar residues over residues 159–178, 279–289, and 298–324; these read PRRN…TTKS, SPASESSSQAQ, and TSAS…PTAS. Residues 430–450 form a helical membrane-spanning segment; sequence IVIVILMAVIILLVFIGLILL. Residues 451–500 are Cytoplasmic-facing; it reads VSCASRARHVLTQNSEEPEPQPEDKGSRNSYPVYLMEQQNLNLNQIPSPP.

It localises to the cell membrane. It is found in the cytoplasm. In terms of biological role, may modulate NF-kappaB signaling and play a role in cell growth. The chain is Mucin-like protein 3 from Mus musculus (Mouse).